Here is a 210-residue protein sequence, read N- to C-terminus: Nta operon transcriptional regulator (210 aa).

The HTH gntR-type domain maps to 1–55 (MAVSYHFRPGERINEVELAAQLKVSRTPLREALNRLTTEGFLTTTANKGFFARVL). Residues 15-34 (EVELAAQLKVSRTPLREALN) constitute a DNA-binding region (H-T-H motif).

Its function is as follows. Probable regulator for the expression of the NTA monooxygenase subunits. The protein is Nta operon transcriptional regulator (ntaR) of Aminobacter aminovorans (Chelatobacter heintzii).